Consider the following 373-residue polypeptide: Indole glucosinolate O-methyltransferase 2 (373 aa).

Glycine 217, aspartate 240, aspartate 260, methionine 261, and lysine 274 together coordinate S-adenosyl-L-homocysteine. The Proton acceptor role is filled by histidine 278.

This sequence belongs to the class I-like SAM-binding methyltransferase superfamily. Cation-independent O-methyltransferase family.

It functions in the pathway secondary metabolite biosynthesis. In terms of biological role, involved in indole glucosinolate biosynthesis. Catalyzes methoxylation reactions of the glucosinolate indole ring. Converts the hydroxy intermediates 4-hydroxy-indol-3-yl-methylglucosinolate (4OH-I3M) and 1-hydroxy-indol-3-yl-methylglucosinolate (1OH-I3M) to 4-methoxy-indol-3-yl-methylglucosinolate (4MO-I3M) and 1-methoxy-indol-3-yl-methylglucosinolate (1MO-I3M), respectively. The polypeptide is Indole glucosinolate O-methyltransferase 2 (Arabidopsis thaliana (Mouse-ear cress)).